The following is a 180-amino-acid chain: Large ribosomal subunit protein uL18m (180 aa).

The protein belongs to the universal ribosomal protein uL18 family. Component of the mitochondrial large ribosomal subunit (mt-LSU). Mature mammalian 55S mitochondrial ribosomes consist of a small (28S) and a large (39S) subunit. The 28S small subunit contains a 12S ribosomal RNA (12S mt-rRNA) and 30 different proteins. The 39S large subunit contains a 16S rRNA (16S mt-rRNA), a copy of mitochondrial valine transfer RNA (mt-tRNA(Val)), which plays an integral structural role, and 52 different proteins.

Its subcellular location is the mitochondrion. Functionally, together with thiosulfate sulfurtransferase (TST), acts as a mitochondrial import factor for the cytosolic 5S rRNA. The precursor form shows RNA chaperone activity; is able to fold the 5S rRNA into an import-competent conformation that is recognized by rhodanese (TST). Both the cytoplasmic and mitochondrial forms are able to bind to the helix IV-loop D in the gamma domain of the 5S rRNA. The chain is Large ribosomal subunit protein uL18m (MRPL18) from Homo sapiens (Human).